Here is a 382-residue protein sequence, read N- to C-terminus: ATP phosphoribosyltransferase regulatory subunit (382 aa).

It belongs to the class-II aminoacyl-tRNA synthetase family. HisZ subfamily. In terms of assembly, heteromultimer composed of HisG and HisZ subunits.

The protein localises to the cytoplasm. Its pathway is amino-acid biosynthesis; L-histidine biosynthesis; L-histidine from 5-phospho-alpha-D-ribose 1-diphosphate: step 1/9. Functionally, required for the first step of histidine biosynthesis. May allow the feedback regulation of ATP phosphoribosyltransferase activity by histidine. The polypeptide is ATP phosphoribosyltransferase regulatory subunit (Burkholderia vietnamiensis (strain G4 / LMG 22486) (Burkholderia cepacia (strain R1808))).